Here is a 342-residue protein sequence, read N- to C-terminus: UDP-glucuronic acid decarboxylase 3 (342 aa).

Polar residues predominate over residues 1–11 (MAATSEKQNTT). Positions 1 to 22 (MAATSEKQNTTKPPPSPSPLRN) are disordered. An NAD(+)-binding site is contributed by 61–86 (DNYFTGSKENLKKWIGHPRFELIRHD). Residue Arg170 participates in substrate binding. Residue Tyr173 is the Proton acceptor of the active site. 173 to 177 (YDEGK) serves as a coordination point for NAD(+). Asn202 contacts substrate. Arg214 provides a ligand contact to NAD(+). Substrate is bound by residues 215–219 (VVSNF), 232–239 (QKPGTQTR), and 299–303 (DPRQR).

Belongs to the NAD(P)-dependent epimerase/dehydratase family. UDP-glucuronic acid decarboxylase subfamily. NAD(+) is required as a cofactor. Ubiquitous.

The protein localises to the cytoplasm. The enzyme catalyses UDP-alpha-D-glucuronate + H(+) = UDP-alpha-D-xylose + CO2. The protein operates within nucleotide-sugar biosynthesis; UDP-alpha-D-xylose biosynthesis; UDP-alpha-D-xylose from UDP-alpha-D-glucuronate: step 1/1. Its function is as follows. Catalyzes the NAD-dependent decarboxylation of UDP-glucuronic acid to UDP-xylose. Necessary for the biosynthesis of the core tetrasaccharide in glycosaminoglycan biosynthesis. The polypeptide is UDP-glucuronic acid decarboxylase 3 (UXS3) (Arabidopsis thaliana (Mouse-ear cress)).